The following is a 406-amino-acid chain: 11-beta-hydroxysteroid dehydrogenase type 2 (406 aa).

82-111 (TRAVLITGCDSGFGKETAKKLDAMGFTVLA) serves as a coordination point for NAD(+). Ser-219 provides a ligand contact to substrate. Tyr-232 functions as the Proton acceptor in the catalytic mechanism. The tract at residues 379–406 (GQPGATPAPDTAQDNPNPNPDPSLVGAR) is disordered.

This sequence belongs to the short-chain dehydrogenases/reductases (SDR) family. As to quaternary structure, interacts with ligand-free cytoplasmic NR3C2. As to expression, highly expressed in the kidney.

It is found in the microsome. Its subcellular location is the endoplasmic reticulum. It catalyses the reaction an 11beta-hydroxysteroid + NAD(+) = an 11-oxosteroid + NADH + H(+). The catalysed reaction is corticosterone + NAD(+) = 11-dehydrocorticosterone + NADH + H(+). The enzyme catalyses cortisol + NAD(+) = cortisone + NADH + H(+). It carries out the reaction 11beta,17beta-dihydroxyandrost-4-ene-3-one + NAD(+) = 17beta-hydroxyandrost-4-ene-3,11-dione + NADH + H(+). It catalyses the reaction 11beta-hydroxyandrost-4-ene-3,17-dione + NAD(+) = androst-4-ene-3,11,17-trione + NADH + H(+). The protein operates within steroid metabolism. With respect to regulation, inhibited by carbenoloxone. Functionally, catalyzes the conversion of biologically active 11beta-hydroxyglucocorticoids (11beta-hydroxysteroid) such as corticosterone, to inactive 11-ketoglucocorticoids (11-oxosteroid) such as 11-dehydrocorticosterone, in the presence of NAD(+). Functions as a dehydrogenase (oxidase), thereby decreasing the concentration of active glucocorticoids, thus protecting the nonselective mineralocorticoid receptor from occupation by glucocorticoids. Plays an important role in maintaining glucocorticoids balance during preimplantation and protects the fetus from excessive maternal corticosterone exposure. Catalyzes the oxidation of 11beta-hydroxytestosterone (11beta,17beta-dihydroxyandrost-4-ene-3-one) to 11-ketotestosterone (17beta-hydroxyandrost-4-ene-3,11-dione), a major bioactive androgen. Catalyzes the conversion of 11beta-hydroxyandrostenedione (11beta-hydroxyandrost-4-ene-3,17-dione) to 11-ketoandrostenedione (androst-4-ene-3,11,17-trione), which can be further metabolized to 11-ketotestosterone. Converts 7-beta-25-dihydroxycholesterol to 7-oxo-25-hydroxycholesterol in vitro. 7-beta-25-dihydroxycholesterol (not 7-oxo-25-hydroxycholesterol) acts as a ligand for the G-protein-coupled receptor (GPCR) Epstein-Barr virus-induced gene 2 (EBI2) and may thereby regulate immune cell migration. May protect ovulating oocytes and fertilizing spermatozoa from the adverse effects of cortisol. The protein is 11-beta-hydroxysteroid dehydrogenase type 2 (HSD11B2) of Oryctolagus cuniculus (Rabbit).